A 258-amino-acid polypeptide reads, in one-letter code: Gamma carbonic anhydrase 3, mitochondrial (258 aa).

A mitochondrion-targeting transit peptide spans 1–43; the sequence is MGTMGKAFYSVGFWIRETGQALDRLGCRLQGKNHFREQLSRHR. Substrate is bound by residues 86–88 and 101–102; these read RGD and QD. Residues H107, H130, and H135 each contribute to the Zn(2+) site. N209 lines the substrate pocket.

Belongs to the gamma-class carbonic anhydrase family. As to quaternary structure, homotrimer. Component of the oxidoreductase respiratory chain complex I; element of the extra matrix-exposed domain, which is attached to the membrane arm of this complex. Zn(2+) serves as cofactor.

It is found in the mitochondrion membrane. In terms of biological role, enzyme involved in the catabolism of H(2)CO(3) but that does not mediates the reversible hydration of carbon dioxide. Mediates complex I assembly in mitochondria and respiration. In Arabidopsis thaliana (Mouse-ear cress), this protein is Gamma carbonic anhydrase 3, mitochondrial (GAMMACA3).